Here is a 608-residue protein sequence, read N- to C-terminus: Glutamine--fructose-6-phosphate aminotransferase [isomerizing] (608 aa).

Cysteine 2 acts as the Nucleophile; for GATase activity in catalysis. The region spanning cysteine 2 to alanine 217 is the Glutamine amidotransferase type-2 domain. 2 SIS domains span residues leucine 284 to lysine 423 and leucine 456 to proline 598. Catalysis depends on lysine 603, which acts as the For Fru-6P isomerization activity.

Its subcellular location is the cytoplasm. It catalyses the reaction D-fructose 6-phosphate + L-glutamine = D-glucosamine 6-phosphate + L-glutamate. In terms of biological role, involved in the production of the root hair deformation (HAD) factor specifically on soybean. In Bradyrhizobium diazoefficiens (strain JCM 10833 / BCRC 13528 / IAM 13628 / NBRC 14792 / USDA 110), this protein is Glutamine--fructose-6-phosphate aminotransferase [isomerizing] (nodM).